The following is a 453-amino-acid chain: Bifunctional protein GlmU (453 aa).

The tract at residues 1 to 225 is pyrophosphorylase; it reads MNIVILAAGT…EWETLGVNSK (225 aa). UDP-N-acetyl-alpha-D-glucosamine-binding positions include 6-9, Lys20, Gln71, 76-77, 98-100, Gly135, Glu150, Asn165, and Asn223; these read LAAG, GT, and YGD. Asp100 contacts Mg(2+). Asn223 serves as a coordination point for Mg(2+). The interval 226–246 is linker; the sequence is AQLAELERIHQRNIAEALLVD. The tract at residues 247 to 453 is N-acetyltransferase; that stretch reads GVTLADPARL…GYVRPVKKKS (207 aa). The UDP-N-acetyl-alpha-D-glucosamine site is built by Arg329 and Lys347. His359 serves as the catalytic Proton acceptor. UDP-N-acetyl-alpha-D-glucosamine-binding residues include Tyr362 and Asn373. Residues Ala376, 382 to 383, Ser401, and Ala419 each bind acetyl-CoA; that span reads NY.

The protein in the N-terminal section; belongs to the N-acetylglucosamine-1-phosphate uridyltransferase family. This sequence in the C-terminal section; belongs to the transferase hexapeptide repeat family. In terms of assembly, homotrimer. Requires Mg(2+) as cofactor.

The protein localises to the cytoplasm. It carries out the reaction alpha-D-glucosamine 1-phosphate + acetyl-CoA = N-acetyl-alpha-D-glucosamine 1-phosphate + CoA + H(+). The enzyme catalyses N-acetyl-alpha-D-glucosamine 1-phosphate + UTP + H(+) = UDP-N-acetyl-alpha-D-glucosamine + diphosphate. The protein operates within nucleotide-sugar biosynthesis; UDP-N-acetyl-alpha-D-glucosamine biosynthesis; N-acetyl-alpha-D-glucosamine 1-phosphate from alpha-D-glucosamine 6-phosphate (route II): step 2/2. It functions in the pathway nucleotide-sugar biosynthesis; UDP-N-acetyl-alpha-D-glucosamine biosynthesis; UDP-N-acetyl-alpha-D-glucosamine from N-acetyl-alpha-D-glucosamine 1-phosphate: step 1/1. It participates in bacterial outer membrane biogenesis; LPS lipid A biosynthesis. Catalyzes the last two sequential reactions in the de novo biosynthetic pathway for UDP-N-acetylglucosamine (UDP-GlcNAc). The C-terminal domain catalyzes the transfer of acetyl group from acetyl coenzyme A to glucosamine-1-phosphate (GlcN-1-P) to produce N-acetylglucosamine-1-phosphate (GlcNAc-1-P), which is converted into UDP-GlcNAc by the transfer of uridine 5-monophosphate (from uridine 5-triphosphate), a reaction catalyzed by the N-terminal domain. The protein is Bifunctional protein GlmU of Burkholderia lata (strain ATCC 17760 / DSM 23089 / LMG 22485 / NCIMB 9086 / R18194 / 383).